Consider the following 291-residue polypeptide: Trimeric intracellular cation channel type B (291 aa).

The Lumenal portion of the chain corresponds to 1-15 (MESPWNELTLAFSRT). Residues 16–33 (SMFPFFDIAHYLVSVMAL) traverse the membrane as a helical segment. The Cytoplasmic portion of the chain corresponds to 34–47 (KHQPGAAALAWKNP). The chain crosses the membrane as a helical span at residues 48-69 (LSSWFTAMLHCFGGGILSCVLL). The Lumenal segment spans residues 70–80 (AEPPLRFLANN). The chain crosses the membrane as a helical span at residues 81 to 100 (TNILLASSIWYIAFFCPCDL). Over 101–103 (ISQ) the chain is Cytoplasmic. Residues 104-122 (AYSFLPVQLLAAGMKEVTR) traverse the membrane as a helical segment. A 1,2-diacyl-sn-glycero-3-phospho-(1D-myo-inositol-4,5-bisphosphate)-binding residues include Lys-118 and Arg-122. Residues 123-138 (TWKIVGGVTHANSYYK) lie on the Lumenal side of the membrane. The chain crosses the membrane as a helical span at residues 139–156 (NGWIVMIAVGWARGAGGS). Residues 157-179 (IITNFEQLVKGCWKPEAEEWLKM) are Cytoplasmic-facing. A helical transmembrane segment spans residues 180-196 (SYPAKVTLLGSVIFTFQ). Residues 197 to 207 (QTKYLAISKHN) lie on the Lumenal side of the membrane. A helical membrane pass occupies residues 208–225 (LMFLFTVFLVATKITMMI). Residues 226 to 291 (TKTALVPFAC…VKKKHSKKTE (66 aa)) are Cytoplasmic-facing. A disordered region spans residues 257–291 (KSETKSSFNGTGSSTSKPVANASDKVKKKHSKKTE). Polar residues predominate over residues 261–274 (KSSFNGTGSSTSKP). Position 262 is a phosphoserine (Ser-262). Positions 282-291 (VKKKHSKKTE) are enriched in basic residues.

The protein belongs to the TMEM38 family. In terms of assembly, homotrimer; conformation seems to be controled by binding to diacylglycerol (DAG).

It is found in the endoplasmic reticulum membrane. The catalysed reaction is K(+)(in) = K(+)(out). With respect to regulation, channel activity is activated by increased cytosolic Ca(2+) levels and blocked by luminal high Ca(2+) levels. In terms of biological role, intracellular monovalent cation channel required for maintenance of rapid intracellular calcium release. Acts as a potassium counter-ion channel that functions in synchronization with calcium release from intracellular stores. Activated by increased cytosolic Ca(2+) levels. This Bos taurus (Bovine) protein is Trimeric intracellular cation channel type B (TMEM38B).